We begin with the raw amino-acid sequence, 281 residues long: Tetraspanin-5 (281 aa).

Residues 1-7 (MNRMSNT) are Cytoplasmic-facing. Residues 8–28 (VIGFLNILTLISSIVLLGSAL) form a helical membrane-spanning segment. The Extracellular portion of the chain corresponds to 29 to 44 (WMGRSKTTCEHFLQKP). Residues 45–65 (LLILGLAILILSVAGLVGACC) form a helical membrane-spanning segment. The Cytoplasmic segment spans residues 66 to 74 (DVAWVLWVY). Residues 75-95 (LFFMVFIIVALMGLTLFGFIV) traverse the membrane as a helical segment. The Extracellular segment spans residues 96–221 (TSHSGGVVVD…TVRRDWHKLS (126 aa)). The chain crosses the membrane as a helical span at residues 222-242 (LVNVIVVIFLIAVYCVGCCAF). The Cytoplasmic portion of the chain corresponds to 243–281 (KNAKRPQHYGFPYGRYGMSKSRPGWEQSWSRWWHGRDRY).

Belongs to the tetraspanin (TM4SF) family.

It is found in the membrane. Its function is as follows. May be involved in the regulation of cell differentiation. The sequence is that of Tetraspanin-5 (TET5) from Arabidopsis thaliana (Mouse-ear cress).